The following is a 775-amino-acid chain: Chloride channel protein CLC-a (775 aa).

The interval 1 to 28 (MDEDGNLQISNSNYNGEEEGEDPENNTL) is disordered. A run of 12 helical transmembrane segments spans residues 88–108 (TLAC…NLAV), 131–151 (GLMV…VLVV), 178–198 (FGFT…AAGL), 206–226 (LVHI…DNHR), 248–268 (GSAS…LFAL), 278–298 (ALLW…RAFI), 328–348 (AADI…GSLY), 371–391 (VLLS…LPFL), 453–473 (MVSL…TFGI), 478–498 (GLFL…GTAM), 510–530 (AVLG…SLCV), and 531–551 (IFLE…VLLI). CBS domains lie at 595-658 (AKPP…FLNE) and 703-768 (TNTT…HLDK). A helical membrane pass occupies residues 730–750 (HLLVVPKIQASGMSPVIGILT).

Belongs to the chloride channel (TC 2.A.49) family. Homodimer. Interacts with PP2A5. In terms of tissue distribution, broadly expressed in the plant.

The protein resides in the membrane. Functionally, voltage-gated chloride channel that could play a role in the regulation of nitrate content. This is Chloride channel protein CLC-a (CLC-A) from Arabidopsis thaliana (Mouse-ear cress).